We begin with the raw amino-acid sequence, 314 residues long: Atrochrysone carboxyl ACP thioesterase AgnL7 (314 aa).

Positions 103, 105, 107, and 108 each coordinate Zn(2+). Residue D107 is the Proton donor/acceptor of the active site.

This sequence belongs to the metallo-beta-lactamase superfamily. Zn(2+) is required as a cofactor.

It carries out the reaction atrochrysone carboxyl-[ACP] + H2O = atrochrysone carboxylate + holo-[ACP] + H(+). It functions in the pathway secondary metabolite biosynthesis. Atrochrysone carboxyl ACP thioesterase; part of the gene cluster that mediates the biosynthesis of agnestins, dihydroxy-xanthone metabolites. The pathway begins with the assembly and cyclization of atrochrysone thioester by the non-reducing polyketide synthase Agnpks1. The atrochrysone carboxyl ACP thioesterase AgnL7 then breaks the thioester bond and releases the atrochrysone carboxylic acid as the first enzyme-free intermediate. The decarboxylase AgnL1 then catalyzes the concerted decarboxylation-elimination required to convert atochrysone carboxylic acid into emodin anthrone, which is further oxidized to emodin by the anthrone oxygenase AgnL2. Emodin then undergoes reduction catalyzed by the oxidoreductase AgnL4 to yield the dihydroquinone tautomer which is the substrate for reduction by the short chain dehydrogenase AgnL6 reduction to produce hydroxyketone, followed by AgnL8 dehydration and likely spontaneous autoxidation to chrysophanol. Baeyer-Villiger oxidation by the oxidase AgnL3 leads to monodictyphenone via cleavage of the C-10/C-10a bond of chrysophanol. Alternative cleavage at the C-4a/C-10 bond of chrysophanol also leads to the formation some cephalone F. Further conversion to agnestins A and B, requires reduction to dihydro-monodictyphenone, oxidation to agnestin C probably via an epoxide, and rearrangement to either agnestin A or agnestin B directly, although agnestin A or agnestin B can also interconvert. Within the cluster, AgnR1 is the only unassigned oxidoreductase present which could be involved in this conversion. However, AgnR1 seems not to be involved in this step, and thus genes involved in the proposed oxidation/reduction may be located elsewhere on the genome. Further agnestin A derivatives are probably formed by spontaneous decarboxylations, dehydrations and methanolysis reactions. This is Atrochrysone carboxyl ACP thioesterase AgnL7 from Paecilomyces divaricatus (Penicillium divaricatum).